The following is a 360-amino-acid chain: sn-glycerol-3-phosphate import ATP-binding protein UgpC (360 aa).

The 232-residue stretch at L4 to I235 folds into the ABC transporter domain. ATP is bound at residue G37–S44.

This sequence belongs to the ABC transporter superfamily. sn-glycerol-3-phosphate importer (TC 3.A.1.1.3) family. The complex is composed of two ATP-binding proteins (UgpC), two transmembrane proteins (UgpA and UgpE) and a solute-binding protein (UgpB).

It is found in the cell inner membrane. The catalysed reaction is sn-glycerol 3-phosphate(out) + ATP + H2O = sn-glycerol 3-phosphate(in) + ADP + phosphate + H(+). In terms of biological role, part of the ABC transporter complex UgpBAEC involved in sn-glycerol-3-phosphate (G3P) import. Responsible for energy coupling to the transport system. This is sn-glycerol-3-phosphate import ATP-binding protein UgpC from Burkholderia mallei (strain ATCC 23344).